A 564-amino-acid chain; its full sequence is MAIAEEEAALIEDSVSDSVDHRGLPAGKSSTGGWRSAWYIIGVEVGERFAYFGIGSNLITYLTGPLGQSTATAAVNVNTWSGTASILPVLGAFIADAYLGRYRTIVVASLIYILGLGLLTLSSILILMGLSEQRQHNRNASAKPFFWVNILFFCSLYLVAIGQGGHKPCVQAFGADQFDVGDPKERISRGSFFNWWFLSLSAGITLSIIVVVYVQDNVNWALGFGIPCLFMVMALALFLFGRKTYRYPRGDREGKNNAFARIGRVFLVAFKNRKLKLTHSGQLEVGSYKKCKGQLEFLAKALLPGEGGVEPCSSRDVEDAMALVRLIPIWITSVVSTIPYAQYATFFTKQGVTVDRKILPGFEIPPASFQALIGLSIFISVPTYERVFLPLARLITKKPSGITMLQRIGAGMVLSSLNMVVAALVEMKRLETAKEHGLVDRPDATIPMSIWWFVPQYLLLGMIDVFSLVGTQEFFYDQVPTELRSIGLALSLSAMGLASFLSGFLITVINWATGKNGGDSWFNTNLNRAHVDYFYWLLAAFTAIGFLAFLLLSRLYVYRRVDQV.

2 helical membrane-spanning segments follow: residues 49-69 and 80-100; these read FAYF…LGQS and WSGT…AYLG. Thr-104 bears the Phosphothreonine mark. Helical transmembrane passes span 110 to 130, 145 to 165, 192 to 212, 220 to 240, 327 to 347, 358 to 378, 408 to 428, 450 to 470, 486 to 506, and 533 to 553; these read LIYI…LMGL, FFWV…GQGG, FFNW…IVVV, WALG…LFLF, IPIW…ATFF, ILPG…LSIF, IGAG…VEMK, IWWF…SLVG, IGLA…GFLI, and YFYW…LLLS.

Belongs to the major facilitator superfamily. Proton-dependent oligopeptide transporter (POT/PTR) (TC 2.A.17) family. Expressed in shoots and roots.

Its subcellular location is the membrane. In Arabidopsis thaliana (Mouse-ear cress), this protein is Protein NRT1/ PTR FAMILY 5.16 (NPF5.16).